Reading from the N-terminus, the 1088-residue chain is RNA-directed RNA polymerase (1088 aa).

The RdRp catalytic domain occupies 501–687 (LSYGDVTRFL…AKRYIAGGKI (187 aa)).

This sequence belongs to the reoviridae RNA-directed RNA polymerase family. Interacts with VP3 (Potential). Interacts with VP2; this interaction activates VP1. Interacts with NSP5; this interaction is probably necessary for the formation of functional virus factories. Interacts with NSP2; this interaction is weak. It depends on Mg(2+) as a cofactor.

Its subcellular location is the virion. It catalyses the reaction RNA(n) + a ribonucleoside 5'-triphosphate = RNA(n+1) + diphosphate. Its function is as follows. RNA-directed RNA polymerase that is involved in both transcription and genome replication. Together with VP3 capping enzyme, forms an enzyme complex positioned near the channels situated at each of the five-fold vertices of the core. Following infection, the outermost layer of the virus is lost, leaving a double-layered particle (DLP) made up of the core and VP6 shell. VP1 then catalyzes the transcription of fully conservative plus-strand genomic RNAs that are extruded through the DLP's channels into the cytoplasm where they function as mRNAs for translation of viral proteins. One copy of each of the viral (+)RNAs is also recruited during core assembly, together with newly synthesized polymerase complexes and VP2. The polymerase of these novo-formed particles catalyzes the synthesis of complementary minus-strands leading to dsRNA formation. To do so, the polymerase specifically recognizes and binds 4 bases 5'-UGUG-3' in the conserved 3'-sequence of plus-strand RNA templates. VP2 presumably activates the autoinhibited VP1-RNA complex to coordinate packaging and genome replication. Once dsRNA synthesis is complete, the polymerase switches to the transcriptional mode, thus providing secondary transcription. This Sus scrofa (Pig) protein is RNA-directed RNA polymerase.